The primary structure comprises 340 residues: Cytosolic Fe-S cluster assembly factor NBP35 (340 aa).

Residues 1-41 (MPSLVDPVANKTDEGNNRTDLKAPEPEHCPGTESEEAGKAD) form a disordered region. Residues 11–30 (KTDEGNNRTDLKAPEPEHCP) are compositionally biased toward basic and acidic residues. Residues cysteine 29, cysteine 43, cysteine 46, and cysteine 52 each contribute to the [4Fe-4S] cluster site. 82–89 (GKGGVGKS) contributes to the ATP binding site. 2 residues coordinate [4Fe-4S] cluster: cysteine 255 and cysteine 258.

The protein belongs to the Mrp/NBP35 ATP-binding proteins family. NUBP1/NBP35 subfamily. As to quaternary structure, heterotetramer of 2 NBP35 and 2 CFD1 chains. [4Fe-4S] cluster is required as a cofactor.

Its subcellular location is the cytoplasm. It is found in the nucleus. Component of the cytosolic iron-sulfur (Fe/S) protein assembly (CIA) machinery. Required for maturation of extramitochondrial Fe-S proteins. The NBP35-CFD1 heterotetramer forms a Fe-S scaffold complex, mediating the de novo assembly of an Fe-S cluster and its transfer to target apoproteins. Required for biogenesis and export of both ribosomal subunits, which may reflect a role in assembly of the Fe/S clusters in RLI1, a protein which performs rRNA processing and ribosome export. The polypeptide is Cytosolic Fe-S cluster assembly factor NBP35 (Yarrowia lipolytica (strain CLIB 122 / E 150) (Yeast)).